Here is a 190-residue protein sequence, read N- to C-terminus: DKRTDSDFSPKPTIFLPSAAETNLHKAGTYLCLLEKFFPKVIRVYWKEKDGEKILESQEGNTIKTNDRYMKFSWLTVTEDSMAKEHSCIVKHENNKRGVDQEILFPPIGKAFTTINVNPRDSVLRHENVNNATDLEDCMKGRKDMLQLQVTTTYAFYTYLILFFKSMVHLAFVVFCLFRRAAMSCDDQRS.

The segment at 1–157 (DKRTDSDFSP…LQVTTTYAFY (157 aa)) is c region. A helical transmembrane segment spans residues 158-178 (TYLILFFKSMVHLAFVVFCLF). The Cytoplasmic portion of the chain corresponds to 179-190 (RRAAMSCDDQRS).

Its subcellular location is the membrane. The sequence is that of T-cell receptor gamma chain C region 5/10-13 from Mus musculus (Mouse).